Consider the following 558-residue polypeptide: Atlastin-1 (558 aa).

The interval methionine 1–glutamate 27 is disordered. The tract at residues methionine 1 to proline 34 is N-terminal hypervariable region (HVR). Residues methionine 1 to alanine 449 are Cytoplasmic-facing. A phosphoserine mark is found at serine 10, serine 22, and serine 23. The 246-residue stretch at aspartate 64–serine 309 folds into the GB1/RHD3-type G domain. Residues arginine 77, lysine 78, glycine 79, lysine 80, serine 81, phenylalanine 82, glutamine 148, arginine 217, aspartate 218, valine 276, and asparagine 279 each coordinate GDP. GTP is bound by residues arginine 77, lysine 78, glycine 79, lysine 80, serine 81, and phenylalanine 82. Serine 81 contacts Mg(2+). The GTP site is built by arginine 217, aspartate 218, and valine 276. The interval methionine 347–serine 438 is 3HB (three-helix bundle) domain. Lysine 395 bears the N6-acetyllysine mark. Residues glutamate 412 to lysine 439 are a coiled coil. A linker region spans residues lysine 439–threonine 447. Residues threonine 450–leucine 470 traverse the membrane as a helical segment. Aspartate 471 is a topological domain (lumenal). The chain crosses the membrane as a helical span at residues isoleucine 472–alanine 492. The Cytoplasmic segment spans residues tyrosine 493–methionine 558. Positions asparagine 521–methionine 558 are autoinhibitory domain.

It belongs to the TRAFAC class dynamin-like GTPase superfamily. GB1/RHD3 GTPase family. GB1 subfamily. Monomeric and homodimeric. The homodimer, transiently formed by two molecules on opposing membranes, is the active form mediating ER membrane fusion. Interacts with REEP1, REEP5, RTN3 and RTN4 (via the transmembrane region); these proteins are involved in endoplasmic reticulum tubular network organization. Interacts with ZFYVE27; both proteins are involved in endoplasmic reticulum tubular network organization. Interacts with ARL6IP1; both proteins are involved in endoplasmic reticulum tubular network organization. Interacts with SPAST; the interaction is direct, could recruit SPAST to Golgi membranes. Interacts (via N-terminal region) with MAP4K4 (via CNH regulatory domain). May interact with TMED2. Interacts with CPT1C. Phosphorylated. Phosphorylation, by different kinases, of the N-terminal hypervariable region (HVR) regulates the ATL1-mediated membrane tethering step.

It localises to the endoplasmic reticulum membrane. The protein resides in the golgi apparatus membrane. The protein localises to the cell projection. It is found in the axon. It catalyses the reaction GTP + H2O = GDP + phosphate + H(+). Functionally, atlastin-1 (ATL1) is a membrane-anchored GTPase that mediates the GTP-dependent fusion of endoplasmic reticulum (ER) membranes, maintaining the continuous ER network. It facilitates the formation of three-way junctions where ER tubules intersect. Two atlastin-1 on neighboring ER tubules bind GTP and form loose homodimers through the GB1/RHD3-type G domains and 3HB regions. Upon GTP hydrolysis, the 3HB regions tighten, pulling the membranes together to drive their fusion. After fusion, the homodimer disassembles upon release of inorganic phosphate (Pi). Subsequently, GDP dissociates, resetting the monomers to a conformation ready for a new fusion cycle. May also regulate more or less directly Golgi biogenesis. Indirectly regulates axonal development. The polypeptide is Atlastin-1 (Macaca fascicularis (Crab-eating macaque)).